The chain runs to 201 residues: Endoribonuclease YbeY (201 aa).

Zn(2+) contacts are provided by His156, His160, and His166.

The protein belongs to the endoribonuclease YbeY family. It depends on Zn(2+) as a cofactor.

It is found in the cytoplasm. Functionally, single strand-specific metallo-endoribonuclease involved in late-stage 70S ribosome quality control and in maturation of the 3' terminus of the 16S rRNA. The protein is Endoribonuclease YbeY of Cupriavidus pinatubonensis (strain JMP 134 / LMG 1197) (Cupriavidus necator (strain JMP 134)).